Consider the following 492-residue polypeptide: Glutamyl-tRNA(Gln) amidotransferase subunit A (492 aa).

Residues Lys-78 and Ser-158 each act as charge relay system in the active site. The active-site Acyl-ester intermediate is the Ser-182.

It belongs to the amidase family. GatA subfamily. Heterotrimer of A, B and C subunits.

It catalyses the reaction L-glutamyl-tRNA(Gln) + L-glutamine + ATP + H2O = L-glutaminyl-tRNA(Gln) + L-glutamate + ADP + phosphate + H(+). Allows the formation of correctly charged Gln-tRNA(Gln) through the transamidation of misacylated Glu-tRNA(Gln) in organisms which lack glutaminyl-tRNA synthetase. The reaction takes place in the presence of glutamine and ATP through an activated gamma-phospho-Glu-tRNA(Gln). The sequence is that of Glutamyl-tRNA(Gln) amidotransferase subunit A from Orientia tsutsugamushi (strain Ikeda) (Rickettsia tsutsugamushi).